The primary structure comprises 519 residues: MILNISVSLLIFLAFYGFSSDAKSLPCSEVKKEYGIVCRCNATYCDTIEPLGTVTSGKAVVYTTSRNGKRMNRSELKHTTSSTAKTKVYVNTTQSFQPVMGFGAAFTDAAGINMKMLPQTMQDQIIQQYFSDDGLGYVFGRVPMASTDFSTHEYSYDDVKFDFDLKNFNLTVEDLQYKIPFIKKAMTASGGKLKLFATPWSSPGWMKTSGRMVGAGELLGDQNGKYYQTWAQYFVKFFEAYHAQGIDFWSLTPQNEPTTGIDPLWKWQTLFFDASMERNFIKKLLGPALASSPVTKNLKIMINDDQRINLPHWPNVILTDPTAAQYVHGIAIHWYEDFIDPATVLTETHEKFPDYFLLATEACAGYFPADGPKLGSWSRAEQYANDLIKDMGNWVGGWVDWNYILDLQGGPNLAKNFVDSTIIVNATAQEYYKQPIWHVMAQFSKFVKPGAIRVGINIIEKSVDVEGLSFLNQDGTKTVVLLNKNEVLSFDVAISDVSAPNVIYDLTIQPNSLITIVYK.

An N-terminal signal peptide occupies residues 1–24 (MILNISVSLLIFLAFYGFSSDAKS). Glu-256 acts as the Proton donor in catalysis. Glu-361 functions as the Nucleophile in the catalytic mechanism.

Belongs to the glycosyl hydrolase 30 family.

It carries out the reaction a beta-D-glucosylceramide + H2O = an N-acyl-sphingoid base + D-glucose. The enzyme catalyses a beta-D-glucosyl-(1&lt;-&gt;1')-N-acylsphing-4-enine + H2O = an N-acylsphing-4-enine + D-glucose. The catalysed reaction is an N-acyl-1-beta-D-glucosyl-15-methylhexadecasphing-4-enine + H2O = an N-acyl-15-methylhexadecasphing-4-enine + D-glucose. Its pathway is lipid metabolism; sphingolipid metabolism. Its function is as follows. Glucosylceramidase that catalyzes the hydrolysis of glucosylceramides into free ceramides and glucose. C.elegans contains specific sphingoid bases, which are unique or different in structure compared to the sphingoid bases found in other animals. Two examples of these distinctive compounds are: 15-methylhexadecasphinganine and 15-methylhexadecasphing-4-enine. This is Putative glucosylceramidase 4 (gba-4) from Caenorhabditis elegans.